Here is a 484-residue protein sequence, read N- to C-terminus: Suppressor of fused homolog (484 aa).

The disordered stretch occupies residues 1–21 (MAELRPSVAPGPAAPPASGPS). The segment covering 12 to 21 (PAAPPASGPS) has biased composition (pro residues). Residue K257 forms a Glycyl lysine isopeptide (Lys-Gly) (interchain with G-Cter in ubiquitin) linkage. Positions 279 to 360 (SRPPEDEEDS…SSTAIIPHEL (82 aa)) are disordered. S301 is subject to Phosphoserine. At K303 the chain carries N6-acetyllysine. K321 participates in a covalent cross-link: Glycyl lysine isopeptide (Lys-Gly) (interchain with G-Cter in SUMO2). A compositionally biased stretch (basic and acidic residues) spans 336–347 (THDRAPSRKDSL). 3 positions are modified to phosphoserine: S342, S346, and S352. A Phosphothreonine modification is found at T353. S481 carries the post-translational modification Phosphoserine.

It belongs to the SUFU family. In terms of assembly, may form homodimers. Interacts with ULK3; inactivating the protein kinase activity of ULK3. Interacts with RAB23. Part of a DNA-bound corepressor complex containing SAP18, GLI1 and SIN3. Part of a complex containing CTNNB1. Binds BTRC, GLI2, GLI3, SAP18 and STK36. Binds both free and DNA-bound GLI1. Interacts with KIF7. Interacts with GLI3FL and this interaction regulates the formation of either repressor or activator forms of GLI3. Its association with GLI3FL is regulated by Hh signaling and dissociation of the SUFU-GLI3 interaction requires the presence of the ciliary motor KIF3A. In terms of processing, polyubiquitinated at Lys-257 by the SCF(FBXL17) complex, leading to its subsequent degradation and allowing the release of GLI1 for proper hedgehog/smoothened signal transduction. Ubiquitination is impaired by phosphorylation at Ser-342, Ser-346, Ser-352 and Thr-353. Post-translationally, phosphorylation at Ser-342, Ser-346, Ser-352 and Thr-353 prevents ubiquitination by the SCF(FBXL17) complex. As to expression, widely expressed in adult and fetal tissues.

The protein resides in the cytoplasm. It localises to the nucleus. Functionally, negative regulator in the hedgehog/smoothened signaling pathway. Down-regulates GLI1-mediated transactivation of target genes. Part of a corepressor complex that acts on DNA-bound GLI1. May also act by linking GLI1 to BTRC and thereby targeting GLI1 to degradation by the proteasome. Sequesters GLI1, GLI2 and GLI3 in the cytoplasm, this effect is overcome by binding of STK36 to both SUFU and a GLI protein. Negative regulator of beta-catenin signaling. Regulates the formation of either the repressor form (GLI3R) or the activator form (GLI3A) of the full-length form of GLI3 (GLI3FL). GLI3FL is complexed with SUFU in the cytoplasm and is maintained in a neutral state. Without the Hh signal, the SUFU-GLI3 complex is recruited to cilia, leading to the efficient processing of GLI3FL into GLI3R. When Hh signaling is initiated, SUFU dissociates from GLI3FL and the latter translocates to the nucleus, where it is phosphorylated, destabilized, and converted to a transcriptional activator (GLI3A). Required for normal embryonic development. Required for the proper formation of hair follicles and the control of epidermal differentiation. The protein is Suppressor of fused homolog of Mus musculus (Mouse).